Here is a 421-residue protein sequence, read N- to C-terminus: Cyclin-A1 (421 aa).

The interval 1-21 is disordered; the sequence is MHRQSSKSGVALPPVGQGPDA.

This sequence belongs to the cyclin family. Cyclin AB subfamily. As to quaternary structure, interacts with INCA1 and KLHDC9. Interacts with the CDK2 and CDC2 protein kinases to form a serine/threonine kinase holoenzyme complex. The cyclin subunit imparts substrate specificity to the complex. Found in a complex with CDK2, CABLES1 and CCNE1. Polyubiquitinated via 'Lys-11'-linked ubiquitin by the anaphase-promoting complex (APC/C), leading to its degradation by the proteasome. Deubiquitinated and stabilized by USP37 enables entry into S phase. Ubiquitinated during the G1 phase by the SCF(FBXO31) complex, leading to its proteasomal degradation. In terms of tissue distribution, testis and ovaries.

It localises to the nucleus. Its subcellular location is the cytoplasm. The protein localises to the cytoskeleton. The protein resides in the spindle. Functionally, may be involved in the control of the cell cycle at the G1/S (start) and G2/M (mitosis) transitions. May primarily function in the control of the germline meiotic cell cycle and additionally in the control of mitotic cell cycle in some somatic cells. This Mus musculus (Mouse) protein is Cyclin-A1 (Ccna1).